The chain runs to 907 residues: Collagen alpha-2(I) chain (907 aa).

Disordered stretches follow at residues 1–183 (GPMG…GIPG) and 199–907 (IPGP…PGPS). Basic and acidic residues predominate over residues 19–33 (AGEDGHPGKPGRERG). Low complexity-rich tracts occupy residues 101 to 130 (VGAPGPAGARGSDGSVGPVGPAGPIGSAGP), 155 to 169 (AGPRGEVGIPGVSGP), and 206 to 221 (PGPVGAAGATGARGIV). At Asn-260 the chain carries Deamidated asparagine. At Pro-272 the chain carries 4-hydroxyproline. Composition is skewed to low complexity over residues 272 to 281 (PGIRGSRGIP), 292 to 307 (PPGSRGASGPAGVRGP), 340 to 362 (PAGIPGIDGRPGPAGPAGARGEP), 424 to 441 (PGESGAAGPAGPIGSRGP), 453 to 475 (EPGVVGAPGTAGPSGPSGIPGER), 495 to 507 (APGAVGAPGPAGA), 535 to 555 (VGPAGPNGFAGPAGAAGQPGA), and 566 to 581 (NGPVGPTGPVGSAGPA). The span at 591 to 600 (GSRGDGGPPG) shows a compositional bias: gly residues. Low complexity-rich tracts occupy residues 601–611 (ATGFPGAAGRT), 664–691 (EAGTAGAPGIPGPQGIIGAPGIIGIPGS), 706–745 (EPGPIGIAGPPGARGPPGAVGSPGVNGAPGEAGRDGNPGN), 756–766 (NSGPVGAAGAP), and 783–804 (EPGPVGSVGPAGAVGPRGPSGP). Residues 808 to 819 (RGDKGEPGDKGP) show a composition bias toward basic and acidic residues. Residues 892–907 (AGPPGPPGPPGPPGPS) are compositionally biased toward pro residues.

The protein belongs to the fibrillar collagen family. Trimers of one alpha 2(I) and two alpha 1(I) chains. Interacts (via C-terminus) with TMEM131 (via PapD-L domain); the interaction is direct and is involved in assembly and TRAPPIII ER-to-Golgi transport complex-dependent secretion of collagen. Post-translationally, prolines at the third position of the tripeptide repeating unit (G-X-Y) are hydroxylated in some or all of the chains. As to expression, forms the fibrils of tendon, ligaments and bones. In bones, the fibrils are mineralized with calcium hydroxyapatite.

Its subcellular location is the secreted. It localises to the extracellular space. The protein localises to the extracellular matrix. In terms of biological role, type I collagen is a member of group I collagen (fibrillar forming collagen). The polypeptide is Collagen alpha-2(I) chain (Macrauchenia sp).